A 236-amino-acid chain; its full sequence is 2,3,4,5-tetrahydropyridine-2,6-dicarboxylate N-acetyltransferase (236 aa).

It belongs to the transferase hexapeptide repeat family. DapH subfamily.

It carries out the reaction (S)-2,3,4,5-tetrahydrodipicolinate + acetyl-CoA + H2O = L-2-acetamido-6-oxoheptanedioate + CoA. Its pathway is amino-acid biosynthesis; L-lysine biosynthesis via DAP pathway; LL-2,6-diaminopimelate from (S)-tetrahydrodipicolinate (acetylase route): step 1/3. Functionally, catalyzes the transfer of an acetyl group from acetyl-CoA to tetrahydrodipicolinate. The protein is 2,3,4,5-tetrahydropyridine-2,6-dicarboxylate N-acetyltransferase of Geobacillus kaustophilus (strain HTA426).